We begin with the raw amino-acid sequence, 139 residues long: Transcription antitermination protein NusB (139 aa).

It belongs to the NusB family.

Involved in transcription antitermination. Required for transcription of ribosomal RNA (rRNA) genes. Binds specifically to the boxA antiterminator sequence of the ribosomal RNA (rrn) operons. The sequence is that of Transcription antitermination protein NusB from Sodalis glossinidius (strain morsitans).